Here is a 154-residue protein sequence, read N- to C-terminus: Aspartate carbamoyltransferase regulatory chain (154 aa).

Positions 111, 116, 139, and 142 each coordinate Zn(2+).

Belongs to the PyrI family. As to quaternary structure, contains catalytic and regulatory chains. It depends on Zn(2+) as a cofactor.

In terms of biological role, involved in allosteric regulation of aspartate carbamoyltransferase. This is Aspartate carbamoyltransferase regulatory chain from Parabacteroides distasonis (strain ATCC 8503 / DSM 20701 / CIP 104284 / JCM 5825 / NCTC 11152).